Consider the following 456-residue polypeptide: Exodeoxyribonuclease 7 large subunit (456 aa).

A binds ssDNA, also required to bind the small subunit region spans residues 1–103 (MLPSQSPAIF…DYQIIVESMQ (103 aa)).

Belongs to the XseA family. In terms of assembly, heterooligomer composed of two different subunits with an approximate ratio of 4:1 for small to large subunit. Also estimated to have a 6:1 ration for small to large subunits. It depends on Does not require a metal cofactor. as a cofactor.

It localises to the cytoplasm. It catalyses the reaction Exonucleolytic cleavage in either 5'- to 3'- or 3'- to 5'-direction to yield nucleoside 5'-phosphates.. In terms of biological role, bidirectionally degrades single-stranded DNA into large acid-insoluble oligonucleotides, which are then degraded further into small acid-soluble oligonucleotides. It can degrade 3' or 5' ss regions extending from the termini of duplex DNA molecules and displaced ss regions. It can also excise thymine dimers in vitro. ssDNA-binding requires both subunits. Required for production of the mature 5'-end of retron Ec78 or Ec83 msDNA. Overproduction of this subunit in the absence of an equivalent quantity of the small subunit is toxic, causing cell elongation and chromosome fragmentation or loss; its toxicity is mostly suppressed by RecA. The polypeptide is Exodeoxyribonuclease 7 large subunit (Escherichia coli (strain K12)).